Consider the following 93-residue polypeptide: Insertion element ISR1 uncharacterized 11 kDa protein A1 (93 aa).

2 disordered regions span residues 14 to 33 (RRAR…QERR) and 68 to 93 (RRRA…SAGR).

The chain is Insertion element ISR1 uncharacterized 11 kDa protein A1 from Rhizobium sp.